A 371-amino-acid polypeptide reads, in one-letter code: Maltose/maltodextrin import ATP-binding protein MalK (371 aa).

The region spanning 4 to 234 (VTLKNVCKAY…PENRFVAGFI (231 aa)) is the ABC transporter domain. Position 36-43 (36-43 (GPSGCGKS)) interacts with ATP.

It belongs to the ABC transporter superfamily. Maltooligosaccharide importer (TC 3.A.1.1.1) family. The complex is composed of two ATP-binding proteins (MalK), two transmembrane proteins (MalG and MalK) and a solute-binding protein (MalE).

The protein localises to the cell inner membrane. It catalyses the reaction D-maltose(out) + ATP + H2O = D-maltose(in) + ADP + phosphate + H(+). Part of the ABC transporter complex MalEFGK involved in maltose/maltodextrin import. Responsible for energy coupling to the transport system. This Vibrio vulnificus (strain CMCP6) protein is Maltose/maltodextrin import ATP-binding protein MalK.